The sequence spans 262 residues: GDT1-like protein C186.05c (262 aa).

5 helical membrane-spanning segments follow: residues 31–51, 57–77, 83–103, 208–228, and 242–262; these read ISMIIGCELGDKSFIVTALLA, ASVFFGSYLALFFMTSFAVLV, FLFPKSITHILGGTLFLIFGV, VLDVFIGVNIGHMLCTMVAVI, and VLFFGGIVFMIFGILYIFQGF.

The protein belongs to the GDT1 family.

It localises to the endoplasmic reticulum membrane. The chain is GDT1-like protein C186.05c from Schizosaccharomyces pombe (strain 972 / ATCC 24843) (Fission yeast).